The chain runs to 795 residues: Mitochondrial inner membrane m-AAA protease component paraplegin (795 aa).

Residues 1 to 43 (MAVLLLLLRALRRGPGPGPRPLWGPGPAWSPGFPARPGRGRPY) constitute a mitochondrion transit peptide. The propeptide at 44–105 (MASRPPGDLA…GGTFYFNTSR (62 aa)) is removed in mature form. The Mitochondrial matrix portion of the chain corresponds to 106 to 144 (LKQKNKEKDKSKGKAPEEDEEERRRRERDDQMYRERLRT). The disordered stretch occupies residues 108–133 (QKNKEKDKSKGKAPEEDEEERRRRER). Residues 109-133 (KNKEKDKSKGKAPEEDEEERRRRER) are compositionally biased toward basic and acidic residues. The helical transmembrane segment at 145–165 (LLVIAVVMSLLNALSTSGGSI) threads the bilayer. Residues 166–248 (SWNDFVHEML…DRIPVSYKRT (83 aa)) lie on the Mitochondrial intermembrane side of the membrane. A helical membrane pass occupies residues 249 to 269 (GFFGNALYSVGMTAVGLAILW). Topologically, residues 270–795 (YVFRLAGMTG…LGGEEPTWPK (526 aa)) are mitochondrial matrix. 7 residues coordinate ATP: Ala312, Gly352, Cys353, Gly354, Lys355, Thr356, and Leu357. 3'-nitrotyrosine is present on Tyr505. Position 574 (His574) interacts with Zn(2+). The active site involves Glu575. 2 residues coordinate Zn(2+): His578 and Asp650. The interaction with PPIF stretch occupies residues 701-795 (HEARLLVAKA…LGGEEPTWPK (95 aa)). Positions 751–795 (PHGPKKMIAPQRWIDAQREKQDLGEEETEETQQPPLGGEEPTWPK) are disordered.

It in the N-terminal section; belongs to the AAA ATPase family. This sequence in the C-terminal section; belongs to the peptidase M41 family. As to quaternary structure, forms heterooligomers with AFG3L2; the m-AAA protease is composed of heterohexamers of AFG3L2 and SPG7. Component of the mitochondrial permeability transition pore complex (mPTPC), at least composed of SPG7, VDAC1 and PPIF. Interacts with MAIP1. Requires Zn(2+) as cofactor. Upon import into the mitochondrion, the N-terminal transit peptide is cleaved by the mitochondrial-processing peptidase (MPP) to generate an intermediate form which undergoes a second proteolytic cleavage mediated by proteases AFG3L2 removing an additional N-terminal fragment to generate the proteolytically active mature form. In terms of tissue distribution, ubiquitous.

Its subcellular location is the mitochondrion inner membrane. The enzyme catalyses ATP + H2O = ADP + phosphate + H(+). Its function is as follows. Catalytic component of the m-AAA protease, a protease that plays a key role in proteostasis of inner mitochondrial membrane proteins, and which is essential for axonal and neuron development. SPG7 possesses both ATPase and protease activities: the ATPase activity is required to unfold substrates, threading them into the internal proteolytic cavity for hydrolysis into small peptide fragments. The m-AAA protease exerts a dual role in the mitochondrial inner membrane: it mediates the processing of specific regulatory proteins and ensures protein quality control by degrading misfolded polypeptides. Mediates protein maturation of the mitochondrial ribosomal subunit MRPL32/bL32m by catalyzing the cleavage of the presequence of MRPL32/bL32m prior to assembly into the mitochondrial ribosome. Acts as a regulator of calcium in neurons by mediating degradation of SMDT1/EMRE before its assembly with the uniporter complex, limiting the availability of SMDT1/EMRE for MCU assembly and promoting efficient assembly of gatekeeper subunits with MCU. Also regulates mitochondrial calcium by catalyzing degradation of MCU. Plays a role in the formation and regulation of the mitochondrial permeability transition pore (mPTP) and its proteolytic activity is dispensable for this function. The chain is Mitochondrial inner membrane m-AAA protease component paraplegin from Homo sapiens (Human).